Here is a 139-residue protein sequence, read N- to C-terminus: ATP synthase epsilon chain (139 aa).

Belongs to the ATPase epsilon chain family. In terms of assembly, F-type ATPases have 2 components, CF(1) - the catalytic core - and CF(0) - the membrane proton channel. CF(1) has five subunits: alpha(3), beta(3), gamma(1), delta(1), epsilon(1). CF(0) has three main subunits: a, b and c.

It is found in the cell inner membrane. Functionally, produces ATP from ADP in the presence of a proton gradient across the membrane. This chain is ATP synthase epsilon chain, found in Pseudomonas putida (strain ATCC 47054 / DSM 6125 / CFBP 8728 / NCIMB 11950 / KT2440).